Reading from the N-terminus, the 195-residue chain is Rubrerythrin (195 aa).

In terms of domain architecture, Ferritin-like diiron spans 1-150 (MKSLKGTKTA…KLAKNIEEGK (150 aa)). Residues glutamate 20, glutamate 53, glutamate 98, glutamate 101, glutamate 132, histidine 135, cysteine 162, cysteine 165, cysteine 178, and cysteine 181 each contribute to the Fe(3+) site. A Rubredoxin-like domain is found at 157–195 (VVLWKCGNCGFIWEGAEAPLKCPACLHPQAYFEVFKETY).

Homodimer. Possesses two rubredoxin-like centers and two non-sulfur oxo-bridged di-iron centers per dimer. The cofactor is Fe(3+).

It localises to the cytoplasm. In terms of biological role, may provide oxidative stress protection via catalytic reduction of intracellular hydrogen peroxide. This is Rubrerythrin (rbr) from Clostridium perfringens (strain 13 / Type A).